We begin with the raw amino-acid sequence, 371 residues long: Putative glutamate--cysteine ligase 2 (371 aa).

This sequence belongs to the glutamate--cysteine ligase type 2 family. YbdK subfamily.

The catalysed reaction is L-cysteine + L-glutamate + ATP = gamma-L-glutamyl-L-cysteine + ADP + phosphate + H(+). Functionally, ATP-dependent carboxylate-amine ligase which exhibits weak glutamate--cysteine ligase activity. The chain is Putative glutamate--cysteine ligase 2 from Paraburkholderia phytofirmans (strain DSM 17436 / LMG 22146 / PsJN) (Burkholderia phytofirmans).